The primary structure comprises 181 residues: MVDSDGFRPNVGIILANAAGQVFWARRIGQNAWQFPQGGIKAQETPEEALFRELEEEVGLAPADVEVMGCTRGWLRYRLPRRLIRSRSRPVCIGQKQVWFLLRLVGEEEQVQLDRSERPEFDHWRWVDFWHPVQEVVFFKRRVYTRALQELGPLLFPDGLPRQPPVGRPRRSAPPRGCRRA.

One can recognise a Nudix hydrolase domain in the interval 6-149 (GFRPNVGIIL…KRRVYTRALQ (144 aa)). Positions 38–59 (GGIKAQETPEEALFRELEEEVG) match the Nudix box motif. The segment at 159–181 (GLPRQPPVGRPRRSAPPRGCRRA) is disordered. Residues 168 to 181 (RPRRSAPPRGCRRA) show a composition bias toward basic residues.

This sequence belongs to the Nudix hydrolase family. RppH subfamily. A divalent metal cation is required as a cofactor.

In terms of biological role, accelerates the degradation of transcripts by removing pyrophosphate from the 5'-end of triphosphorylated RNA, leading to a more labile monophosphorylated state that can stimulate subsequent ribonuclease cleavage. This Alkalilimnicola ehrlichii (strain ATCC BAA-1101 / DSM 17681 / MLHE-1) protein is RNA pyrophosphohydrolase.